The chain runs to 306 residues: N-acetylmuramic acid 6-phosphate etherase (306 aa).

The SIS domain maps to Thr-59–Lys-222. Catalysis depends on Glu-87, which acts as the Proton donor. Residue Glu-118 is part of the active site.

This sequence belongs to the GCKR-like family. MurNAc-6-P etherase subfamily. As to quaternary structure, homodimer.

The enzyme catalyses N-acetyl-D-muramate 6-phosphate + H2O = N-acetyl-D-glucosamine 6-phosphate + (R)-lactate. Its pathway is amino-sugar metabolism; N-acetylmuramate degradation. Functionally, specifically catalyzes the cleavage of the D-lactyl ether substituent of MurNAc 6-phosphate, producing GlcNAc 6-phosphate and D-lactate. The polypeptide is N-acetylmuramic acid 6-phosphate etherase (Microcystis aeruginosa (strain NIES-843 / IAM M-2473)).